A 262-amino-acid chain; its full sequence is 27 kDa lipoprotein antigen (262 aa).

The N-terminal stretch at 1 to 28 is a signal peptide; that stretch reads MSASCAVPRLTRFAVFAVAGATALSLSA. Low complexity-rich tracts occupy residues 28-57 and 148-158; these read ACGS…PSST and STPGGASSTPP. Disordered regions lie at residues 28 to 60 and 138 to 171; these read ACGS…TPNA and VNGT…KPAW. Cys29 carries N-palmitoyl cysteine lipidation. Cys29 is lipidated: S-diacylglycerol cysteine.

It is found in the cell membrane. The sequence is that of 27 kDa lipoprotein antigen (Mi43) from Mycobacterium intracellulare.